The sequence spans 317 residues: Large ribosomal subunit protein uL10z (317 aa).

Belongs to the universal ribosomal protein uL10 family. In terms of assembly, P0 forms a pentameric complex by interaction with dimers of P1 and P2. In terms of processing, phosphorylated.

Its function is as follows. Ribosomal protein P0 is the functional equivalent of E.coli protein L10. In Arabidopsis thaliana (Mouse-ear cress), this protein is Large ribosomal subunit protein uL10z (RPP0A).